The primary structure comprises 445 residues: Potassium/proton antiporter CemA (445 aa).

4 consecutive transmembrane segments (helical) span residues methionine 44 to cysteine 64, alanine 330 to leucine 350, leucine 368 to leucine 388, and phenylalanine 405 to isoleucine 425.

It belongs to the CemA family.

Its subcellular location is the plastid. It is found in the chloroplast inner membrane. The enzyme catalyses K(+)(in) + H(+)(out) = K(+)(out) + H(+)(in). Contributes to K(+)/H(+) antiport activity by supporting proton efflux to control proton extrusion and homeostasis in chloroplasts in a light-dependent manner to modulate photosynthesis. Prevents excessive induction of non-photochemical quenching (NPQ) under continuous-light conditions. Indirectly promotes efficient inorganic carbon uptake into chloroplasts. The polypeptide is Potassium/proton antiporter CemA (Pleurastrum terricola (Filamentous green alga)).